We begin with the raw amino-acid sequence, 285 residues long: 4-diphosphocytidyl-2-C-methyl-D-erythritol kinase (285 aa).

Residue Lys-10 is part of the active site. 93–103 lines the ATP pocket; sequence PIGGGLGGGSS. Residue Asp-135 is part of the active site.

It belongs to the GHMP kinase family. IspE subfamily.

It catalyses the reaction 4-CDP-2-C-methyl-D-erythritol + ATP = 4-CDP-2-C-methyl-D-erythritol 2-phosphate + ADP + H(+). It functions in the pathway isoprenoid biosynthesis; isopentenyl diphosphate biosynthesis via DXP pathway; isopentenyl diphosphate from 1-deoxy-D-xylulose 5-phosphate: step 3/6. Catalyzes the phosphorylation of the position 2 hydroxy group of 4-diphosphocytidyl-2C-methyl-D-erythritol. The chain is 4-diphosphocytidyl-2-C-methyl-D-erythritol kinase from Vesicomyosocius okutanii subsp. Calyptogena okutanii (strain HA).